We begin with the raw amino-acid sequence, 796 residues long: Quinoprotein glucose dehydrogenase (796 aa).

At 1–10 the chain is on the cytoplasmic side; the sequence is MAINNTGSRR. The chain crosses the membrane as a helical span at residues 11–37; sequence LLVTLTALFAALCGLYLLIGGGWLVAI. Over 38-40 the chain is Periplasmic; that stretch reads GGS. Residues 41–58 traverse the membrane as a helical segment; that stretch reads WYYPIAGLVMLGVAWMLW. Residues 59 to 62 lie on the Cytoplasmic side of the membrane; it reads RSKR. The chain crosses the membrane as a helical span at residues 63-81; sequence AALWLYAALLLGTMIWGVW. Over 82 to 95 the chain is Periplasmic; sequence EVGFDFWALTPRSD. A helical membrane pass occupies residues 96–110; it reads ILVFFGIWLILPFVW. Residues 111–118 are Cytoplasmic-facing; the sequence is RRLVIPAS. A helical membrane pass occupies residues 119-141; that stretch reads GAVAALVVALLISGGILTWAGFN. The Periplasmic segment spans residues 142–796; the sequence is DPQEINGTLS…VAYALPDDVK (655 aa). The Proton acceptor role is filled by Asp-466.

It belongs to the bacterial PQQ dehydrogenase family. Monomer. The cofactor is pyrroloquinoline quinone.

It localises to the cell inner membrane. The catalysed reaction is a ubiquinone + D-glucose = D-glucono-1,5-lactone + a ubiquinol. In terms of biological role, GDH is probably involved in energy conservation rather than in sugar metabolism. The chain is Quinoprotein glucose dehydrogenase (gcd) from Escherichia coli (strain K12).